The chain runs to 309 residues: tRNA uridine(34) hydroxylase (309 aa).

The Rhodanese domain occupies 129–223 (SEPGTIVIDT…YLEEVPAEQS (95 aa)). The active-site Cysteine persulfide intermediate is Cys-183. The tract at residues 288-309 (YAERQRQVELAQARGKRPHIGS) is disordered.

Belongs to the TrhO family.

The catalysed reaction is uridine(34) in tRNA + AH2 + O2 = 5-hydroxyuridine(34) in tRNA + A + H2O. Functionally, catalyzes oxygen-dependent 5-hydroxyuridine (ho5U) modification at position 34 in tRNAs. The chain is tRNA uridine(34) hydroxylase from Mesorhizobium japonicum (strain LMG 29417 / CECT 9101 / MAFF 303099) (Mesorhizobium loti (strain MAFF 303099)).